The chain runs to 137 residues: Phosphoinositide-interacting protein (137 aa).

2 helical membrane-spanning segments follow: residues 56–76 and 94–114; these read IVIM…TCLA and PGFL…VPII.

Interacts with TRPV1.

It is found in the membrane. Functionally, regulatory subunit of TRPV1, a molecular sensor of noxious heat and capsaicin. Positively regulates TRPV1 channel activity via phosphatidylinositol 4,5-bisphosphate (PIP2). Binds various phosphoinositide, including phosphatidylinositol 4,5-bisphosphate (PIP2), but not phosphatidylinositol (PI). This Homo sapiens (Human) protein is Phosphoinositide-interacting protein (PIRT).